The chain runs to 37 residues: Mau operon transcriptional activator (37 aa).

It belongs to the LysR transcriptional regulatory family.

Functionally, transcriptional activator of the mau genes involved in methylamine metabolism. The protein is Mau operon transcriptional activator (mauR) of Paracoccus versutus (Thiobacillus versutus).